Reading from the N-terminus, the 1015-residue chain is Tolloid-like protein 2 (1015 aa).

A signal peptide spans 1–25; that stretch reads MPRATALGALVSLLLLLPLPRGAGG. Disordered stretches follow at residues 24–49 and 88–130; these read GGLG…EQQL and VGAT…TTLL. A propeptide spanning residues 26–149 is cleaved from the precursor; that stretch reads LGERPDATAD…AKTFSPRVRR (124 aa). The segment covering 103-113 has biased composition (polar residues); sequence SESSPDTTAMD. Basic and acidic residues predominate over residues 115–125; it reads GTKEAGKDGRE. The Peptidase M12A domain maps to 149–349; the sequence is RATTSRTERI…AQARKLYKCP (201 aa). An N-linked (GlcNAc...) asparagine glycan is attached at Asn171. 4 disulfides stabilise this stretch: Cys192-Cys348, Cys212-Cys234, Cys214-Cys215, and Cys351-Cys377. His242 serves as a coordination point for Zn(2+). The active site involves Glu243. Zn(2+)-binding residues include His246 and His252. CUB domains are found at residues 351–463 and 464–576; these read CGET…YEAT and CGGD…FFKE. Residues Asn361 and Asn392 are each glycosylated (N-linked (GlcNAc...) asparagine). Disulfide bonds link Cys404–Cys426, Cys464–Cys490, Cys517–Cys539, Cys580–Cys592, Cys588–Cys601, Cys603–Cys616, Cys620–Cys646, Cys673–Cys695, Cys736–Cys747, Cys743–Cys756, Cys758–Cys771, and Cys776–Cys802. Positions 576-617 constitute an EGF-like 1; calcium-binding domain; it reads EVDECSWPDHGGCEHRCVNTLGSYKCACDPGYELAADKKMCE. One can recognise a CUB 3 domain in the interval 620-732; that stretch reads CGGFITKLNG…RGFRAHFFSD (113 aa). Asn628 carries N-linked (GlcNAc...) asparagine glycosylation. Positions 732–772 constitute an EGF-like 2; calcium-binding domain; sequence DKDECAKDNGGCQHECVNTFGSYLCRCRNGYWLHENGHDCK. 2 CUB domains span residues 776–888 and 889–1005; these read CAHK…HSTE and CGGR…YTST. N-linked (GlcNAc...) asparagine glycosylation is present at Asn805. Intrachain disulfides connect Cys829–Cys851, Cys889–Cys919, and Cys946–Cys968. Omega-N-methylarginine occurs at positions 963 and 966.

The cofactor is Zn(2+).

It localises to the secreted. Its function is as follows. Protease which specifically processes pro-lysyl oxidase. Required for the embryonic development. Predominant protease, which in the development, influences dorsal-ventral patterning and skeletogenesis. In Homo sapiens (Human), this protein is Tolloid-like protein 2 (TLL2).